A 131-amino-acid chain; its full sequence is Small ribosomal subunit protein uS11 (131 aa).

This sequence belongs to the universal ribosomal protein uS11 family. In terms of assembly, part of the 30S ribosomal subunit. Interacts with proteins S7 and S18. Binds to IF-3.

In terms of biological role, located on the platform of the 30S subunit, it bridges several disparate RNA helices of the 16S rRNA. Forms part of the Shine-Dalgarno cleft in the 70S ribosome. The chain is Small ribosomal subunit protein uS11 from Thermotoga neapolitana (strain ATCC 49049 / DSM 4359 / NBRC 107923 / NS-E).